Reading from the N-terminus, the 103-residue chain is Large ribosomal subunit protein uL24 (103 aa).

The protein belongs to the universal ribosomal protein uL24 family. Part of the 50S ribosomal subunit.

Functionally, one of two assembly initiator proteins, it binds directly to the 5'-end of the 23S rRNA, where it nucleates assembly of the 50S subunit. One of the proteins that surrounds the polypeptide exit tunnel on the outside of the subunit. The chain is Large ribosomal subunit protein uL24 from Treponema pallidum (strain Nichols).